Here is a 172-residue protein sequence, read N- to C-terminus: Macro domain-containing protein lp_3408 (172 aa).

In terms of domain architecture, Macro spans 1–171 (MVEIKVIHGD…VFSTALAALT (171 aa)).

This sequence belongs to the MacroD-type family.

In Lactiplantibacillus plantarum (strain ATCC BAA-793 / NCIMB 8826 / WCFS1) (Lactobacillus plantarum), this protein is Macro domain-containing protein lp_3408.